Consider the following 285-residue polypeptide: Aldo-keto reductase (285 aa).

165–175 is a binding site for NADP(+); it reads APLAGGILTGK.

It belongs to the aldo/keto reductase family. Aldo/keto reductase 2 subfamily.

The chain is Aldo-keto reductase from Babesia bovis.